Here is a 114-residue protein sequence, read N- to C-terminus: Histone H3-6 (114 aa).

Over residues 1–17 the composition is skewed to basic residues; it reads NTGGKAPRKHIAHKQAK. A disordered region spans residues 1-32; the sequence is NTGGKAPRKHIAHKQAKKSSAAAATGGVKKPH. Positions 18–28 are enriched in low complexity; that stretch reads KSSAAAATGGV.

This sequence belongs to the histone H3 family. The nucleosome is a histone octamer containing two molecules each of H2A, H2B, H3 and H4 assembled in one H3-H4 heterotetramer and two H2A-H2B heterodimers. The octamer wraps approximately 147 bp of DNA.

It localises to the nucleus. Its subcellular location is the chromosome. Core component of nucleosome. Nucleosomes wrap and compact DNA into chromatin, limiting DNA accessibility to the cellular machineries which require DNA as a template. Histones thereby play a central role in transcription regulation, DNA repair, DNA replication and chromosomal stability. DNA accessibility is regulated via a complex set of post-translational modifications of histones, also called histone code, and nucleosome remodeling. This chain is Histone H3-6 (H3-6), found in Stylonychia lemnae (Ciliate).